A 149-amino-acid polypeptide reads, in one-letter code: Large ribosomal subunit protein uL15 (149 aa).

The tract at residues 1-64 (MVELHDLQPH…GQTPLYMRIP (64 aa)) is disordered. Basic residues predominate over residues 31-40 (TAGRGHKGQK).

This sequence belongs to the universal ribosomal protein uL15 family. In terms of assembly, part of the 50S ribosomal subunit.

Binds to the 23S rRNA. The sequence is that of Large ribosomal subunit protein uL15 from Aquifex aeolicus (strain VF5).